Reading from the N-terminus, the 353-residue chain is MYYLSDLSHYAFFTYISVRAGFAFFIALCLSLFLMPKFITWAKNKNASQPIYEYAPETHKTKCHTPTMGGLIFISSAVIASLSCIKFDNIFAISALLCLILFCLIGLIDDLGKVLKKDNHSGLSPRMKLLTQIIAGLICILPLYFSSELSTELFIPFYKHPLFDMEIFAIAFWILVLISSSNAVNLTDGLDGLATVPSIFSLSTLGIFLYLSGNLNYSEYLLLPKIQGLGEVVIICAALIGALMGFLWYNCYPAQVFMGDSGSLALGGFIGFLAIISKNEILLLLIGFVFVLETVSVILQVGSFKIFNKRVFKMAPIHHHFEKVGWVENKIIVRFWMIALLSNLLALASIKLR.

The next 10 helical transmembrane spans lie at Phe-22 to Ala-42, Thr-65 to Ile-85, Asp-88 to Ile-108, Leu-129 to Leu-149, Pro-161 to Ser-181, Gly-192 to Ser-212, Gly-228 to Trp-248, Val-256 to Ile-276, Ile-281 to Val-301, and Lys-330 to Ile-350.

It belongs to the glycosyltransferase 4 family. MraY subfamily. Mg(2+) is required as a cofactor.

Its subcellular location is the cell inner membrane. The enzyme catalyses UDP-N-acetyl-alpha-D-muramoyl-L-alanyl-gamma-D-glutamyl-meso-2,6-diaminopimeloyl-D-alanyl-D-alanine + di-trans,octa-cis-undecaprenyl phosphate = di-trans,octa-cis-undecaprenyl diphospho-N-acetyl-alpha-D-muramoyl-L-alanyl-D-glutamyl-meso-2,6-diaminopimeloyl-D-alanyl-D-alanine + UMP. It functions in the pathway cell wall biogenesis; peptidoglycan biosynthesis. Its function is as follows. Catalyzes the initial step of the lipid cycle reactions in the biosynthesis of the cell wall peptidoglycan: transfers peptidoglycan precursor phospho-MurNAc-pentapeptide from UDP-MurNAc-pentapeptide onto the lipid carrier undecaprenyl phosphate, yielding undecaprenyl-pyrophosphoryl-MurNAc-pentapeptide, known as lipid I. This is Phospho-N-acetylmuramoyl-pentapeptide-transferase from Campylobacter jejuni subsp. jejuni serotype O:23/36 (strain 81-176).